The primary structure comprises 742 residues: Collectin-12 (742 aa).

At 1–37 (MKDDFAEEEEVQSFGYKRFGIQEGTQCTKCKNNWALK) the chain is on the cytoplasmic side. Residues 38 to 58 (FSIILLYILCVLLTITIAILG) traverse the membrane as a helical; Signal-anchor for type II membrane protein segment. Topologically, residues 59–742 (YKVVEKMDNV…DMDKEQIFGV (684 aa)) are extracellular. 2 coiled-coil regions span residues 71 to 101 (GLETSHRRYTEKLTEVESDLKKLDDQAGQKA) and 271 to 334 (NNSA…QLEE). The tract at residues 439 to 605 (TILQGPPGPR…SEPTSVPEAN (167 aa)) is disordered. Collagen-like domains are found at residues 467–526 (GQKG…SGDP) and 527–586 (GPPG…PGPP). Pro residues predominate over residues 475 to 492 (PGPPGPAGEKGPPGPIGP). Low complexity-rich tracts occupy residues 502–522 (RGSPGSKGQRGSPGKTGLPGP) and 532–556 (QGKDGPQGPQGPPGFQGLQGTVGEP). Over residues 571–589 (PGLPGPKGPPGPPGPPGPG) the composition is skewed to pro residues. Cystine bridges form between cysteine 607/cysteine 618, cysteine 635/cysteine 730, and cysteine 708/cysteine 722. A C-type lectin domain is found at 614–731 (YTEKCYYFSI…CEDVNNFICE (118 aa)). Residues isoleucine 644, asparagine 646, glutamate 650, aspartate 670, and glutamate 674 each contribute to the Ca(2+) site. Lysine 691, glutamine 694, and aspartate 696 together coordinate a carbohydrate. Residues glutamine 694, aspartate 696, asparagine 697, glutamate 706, aspartate 707, asparagine 718, aspartate 719, and glutamate 731 each contribute to the Ca(2+) site. Glutamate 706 contributes to the a carbohydrate binding site. 2 residues coordinate a carbohydrate: asparagine 718 and aspartate 719.

Widely expressed.

The protein localises to the membrane. Its function is as follows. Scavenger receptor that displays several functions associated with host defense. Binds to carbohydrates. This Gallus gallus (Chicken) protein is Collectin-12 (COLEC12).